The sequence spans 271 residues: ATP synthase subunit a (271 aa).

Helical transmembrane passes span 38–58, 100–120, 146–166, 220–240, and 242–262; these read FWTL…LFLA, LIAP…LMDL, DVNI…FYSI, LIFI…LNVP, and AIFH…LTIV.

Belongs to the ATPase A chain family. F-type ATPases have 2 components, CF(1) - the catalytic core - and CF(0) - the membrane proton channel. CF(1) has five subunits: alpha(3), beta(3), gamma(1), delta(1), epsilon(1). CF(0) has three main subunits: a(1), b(2) and c(9-12). The alpha and beta chains form an alternating ring which encloses part of the gamma chain. CF(1) is attached to CF(0) by a central stalk formed by the gamma and epsilon chains, while a peripheral stalk is formed by the delta and b chains.

It localises to the cell inner membrane. Its function is as follows. Key component of the proton channel; it plays a direct role in the translocation of protons across the membrane. This chain is ATP synthase subunit a, found in Enterobacter sp. (strain 638).